We begin with the raw amino-acid sequence, 511 residues long: V-type proton ATPase subunit B (511 aa).

R381 serves as a coordination point for ATP. The interval 484–511 (FYGRDREQDDDEEEEEDPDKSGDKLIDA) is disordered. Acidic residues predominate over residues 491 to 501 (QDDDEEEEEDP). Positions 502 to 511 (DKSGDKLIDA) are enriched in basic and acidic residues.

This sequence belongs to the ATPase alpha/beta chains family. V-ATPase is a heteromultimeric enzyme composed of a peripheral catalytic V1 complex (components A to H) attached to an integral membrane V0 proton pore complex (components: a, c, c', c'', d, e, f and VOA1).

It is found in the vacuole membrane. In terms of biological role, non-catalytic subunit of the V1 complex of vacuolar(H+)-ATPase (V-ATPase), a multisubunit enzyme composed of a peripheral complex (V1) that hydrolyzes ATP and a membrane integral complex (V0) that translocates protons. V-ATPase is responsible for acidifying and maintaining the pH of intracellular compartments. In Candida tropicalis (Yeast), this protein is V-type proton ATPase subunit B (VMA2).